The primary structure comprises 278 residues: 4-hydroxy-tetrahydrodipicolinate reductase (278 aa).

NAD(+)-binding positions include 13–18 (GAAGKM) and 111–113 (GTT). The active-site Proton donor/acceptor is the histidine 167. Position 168 (histidine 168) interacts with (S)-2,3,4,5-tetrahydrodipicolinate. Lysine 171 serves as the catalytic Proton donor. A (S)-2,3,4,5-tetrahydrodipicolinate-binding site is contributed by 177 to 178 (GT).

This sequence belongs to the DapB family.

It is found in the cytoplasm. It catalyses the reaction (S)-2,3,4,5-tetrahydrodipicolinate + NAD(+) + H2O = (2S,4S)-4-hydroxy-2,3,4,5-tetrahydrodipicolinate + NADH + H(+). It carries out the reaction (S)-2,3,4,5-tetrahydrodipicolinate + NADP(+) + H2O = (2S,4S)-4-hydroxy-2,3,4,5-tetrahydrodipicolinate + NADPH + H(+). It functions in the pathway amino-acid biosynthesis; L-lysine biosynthesis via DAP pathway; (S)-tetrahydrodipicolinate from L-aspartate: step 4/4. Catalyzes the conversion of 4-hydroxy-tetrahydrodipicolinate (HTPA) to tetrahydrodipicolinate. This is 4-hydroxy-tetrahydrodipicolinate reductase from Trichormus variabilis (strain ATCC 29413 / PCC 7937) (Anabaena variabilis).